A 118-amino-acid chain; its full sequence is CLAVATA3/ESR (CLE)-related protein 12 (118 aa).

The signal sequence occupies residues 1–35 (MLRISSSSSMALKFSQILFIVLWLSLFFLLLHHLY). Composition is skewed to basic and acidic residues over residues 75 to 91 (TPFH…RSGE) and 98 to 108 (IDPRYGVEKRR). The disordered stretch occupies residues 75–118 (TPFHSRDNSRHNHRSGEQYDGDEIDPRYGVEKRRVPSGPNPLHH). 2 positions are modified to hydroxyproline: Pro-110 and Pro-113. The O-linked (Ara...) hydroxyproline glycan is linked to Pro-113.

It belongs to the CLV3/ESR signal peptide family. The O-glycosylation (arabinosylation) of the hydroxyproline Pro-113 enhances binding affinity of the CLE12p peptide for its receptor. In terms of tissue distribution, mostly expressed in seedlings, roots, flowers, stems and apex, and, to a lower extent, in leaves and siliques.

It localises to the secreted. It is found in the extracellular space. Functionally, extracellular signal peptide that regulates cell fate. Represses root apical meristem maintenance. This is CLAVATA3/ESR (CLE)-related protein 12 from Arabidopsis thaliana (Mouse-ear cress).